Reading from the N-terminus, the 90-residue chain is Small ribosomal subunit protein uS15c (90 aa).

It belongs to the universal ribosomal protein uS15 family. In terms of assembly, part of the 30S ribosomal subunit.

The protein resides in the plastid. The protein is Small ribosomal subunit protein uS15c (rps15) of Cuscuta reflexa (Southern Asian dodder).